The sequence spans 234 residues: Demethylmenaquinone methyltransferase (234 aa).

Residues Thr58, Asp79, and 104 to 105 (NA) each bind S-adenosyl-L-methionine.

The protein belongs to the class I-like SAM-binding methyltransferase superfamily. MenG/UbiE family.

The enzyme catalyses a 2-demethylmenaquinol + S-adenosyl-L-methionine = a menaquinol + S-adenosyl-L-homocysteine + H(+). It functions in the pathway quinol/quinone metabolism; menaquinone biosynthesis; menaquinol from 1,4-dihydroxy-2-naphthoate: step 2/2. Methyltransferase required for the conversion of demethylmenaquinol (DMKH2) to menaquinol (MKH2). The chain is Demethylmenaquinone methyltransferase from Lysinibacillus sphaericus (strain C3-41).